A 214-amino-acid polypeptide reads, in one-letter code: Pyridoxine/pyridoxamine 5'-phosphate oxidase (214 aa).

Substrate-binding positions include 8 to 11 (RTNY) and lysine 66. Residues 61 to 66 (RIVLIK), 76 to 77 (FT), arginine 82, lysine 83, and glutamine 105 each bind FMN. 3 residues coordinate substrate: tyrosine 123, arginine 127, and serine 131. FMN is bound by residues 140–141 (QS) and tryptophan 184. 190–192 (RLH) contacts substrate. Arginine 194 is an FMN binding site.

This sequence belongs to the pyridoxamine 5'-phosphate oxidase family. As to quaternary structure, homodimer. Requires FMN as cofactor.

It catalyses the reaction pyridoxamine 5'-phosphate + O2 + H2O = pyridoxal 5'-phosphate + H2O2 + NH4(+). The enzyme catalyses pyridoxine 5'-phosphate + O2 = pyridoxal 5'-phosphate + H2O2. It participates in cofactor metabolism; pyridoxal 5'-phosphate salvage; pyridoxal 5'-phosphate from pyridoxamine 5'-phosphate: step 1/1. The protein operates within cofactor metabolism; pyridoxal 5'-phosphate salvage; pyridoxal 5'-phosphate from pyridoxine 5'-phosphate: step 1/1. Catalyzes the oxidation of either pyridoxine 5'-phosphate (PNP) or pyridoxamine 5'-phosphate (PMP) into pyridoxal 5'-phosphate (PLP). This is Pyridoxine/pyridoxamine 5'-phosphate oxidase from Burkholderia thailandensis (strain ATCC 700388 / DSM 13276 / CCUG 48851 / CIP 106301 / E264).